The sequence spans 246 residues: Uridylate kinase (246 aa).

18 to 21 (KVSG) provides a ligand contact to ATP. Gly60 provides a ligand contact to UMP. ATP contacts are provided by Gly61 and Arg65. UMP-binding positions include Asp80 and 141–148 (TGNPFFTT). ATP contacts are provided by Thr168, Gln169, Tyr174, and Asp177.

Belongs to the UMP kinase family. In terms of assembly, homohexamer.

It localises to the cytoplasm. It catalyses the reaction UMP + ATP = UDP + ADP. Its pathway is pyrimidine metabolism; CTP biosynthesis via de novo pathway; UDP from UMP (UMPK route): step 1/1. With respect to regulation, inhibited by UTP. Functionally, catalyzes the reversible phosphorylation of UMP to UDP. This chain is Uridylate kinase, found in Gluconobacter oxydans (strain 621H) (Gluconobacter suboxydans).